The chain runs to 216 residues: Probable GTP-binding protein EngB (216 aa).

Positions 24–205 (ATPEIAFVGR…WARLAALAAE (182 aa)) constitute an EngB-type G domain. GTP-binding positions include 32-39 (GRSNVGKS), 59-63 (GRTRA), 86-89 (DLPG), 153-156 (TKTD), and 184-186 (FSA). Ser39 and Thr61 together coordinate Mg(2+).

It belongs to the TRAFAC class TrmE-Era-EngA-EngB-Septin-like GTPase superfamily. EngB GTPase family. It depends on Mg(2+) as a cofactor.

Functionally, necessary for normal cell division and for the maintenance of normal septation. The protein is Probable GTP-binding protein EngB of Anaeromyxobacter dehalogenans (strain 2CP-C).